A 95-amino-acid polypeptide reads, in one-letter code: Integration host factor subunit beta (95 aa).

This sequence belongs to the bacterial histone-like protein family. Heterodimer of an alpha and a beta chain.

In terms of biological role, this protein is one of the two subunits of integration host factor, a specific DNA-binding protein that functions in genetic recombination as well as in transcriptional and translational control. The chain is Integration host factor subunit beta from Paracoccus denitrificans (strain Pd 1222).